The primary structure comprises 325 residues: Glutarate 2-hydroxylase (325 aa).

Fe cation is bound by residues His-160, Asp-162, and His-292.

This sequence belongs to the glutarate hydroxylase family. As to quaternary structure, homotetramer. Fe(2+) serves as cofactor.

It carries out the reaction glutarate + 2-oxoglutarate + O2 = (S)-2-hydroxyglutarate + succinate + CO2. Its pathway is amino-acid degradation. In terms of biological role, acts as an alpha-ketoglutarate-dependent dioxygenase catalyzing hydroxylation of glutarate (GA) to L-2-hydroxyglutarate (L2HG). Functions in a L-lysine degradation pathway that proceeds via cadaverine, glutarate and L-2-hydroxyglutarate. The polypeptide is Glutarate 2-hydroxylase (Pseudomonas putida (strain ATCC 700007 / DSM 6899 / JCM 31910 / BCRC 17059 / LMG 24140 / F1)).